The sequence spans 216 residues: Ribosomal RNA small subunit methyltransferase G (216 aa).

S-adenosyl-L-methionine contacts are provided by residues Gly83, Met88, 134–135 (VE), and Arg149.

The protein belongs to the methyltransferase superfamily. RNA methyltransferase RsmG family.

The protein resides in the cytoplasm. The enzyme catalyses guanosine(527) in 16S rRNA + S-adenosyl-L-methionine = N(7)-methylguanosine(527) in 16S rRNA + S-adenosyl-L-homocysteine. In terms of biological role, specifically methylates the N7 position of guanine in position 527 of 16S rRNA. This Pseudomonas entomophila (strain L48) protein is Ribosomal RNA small subunit methyltransferase G.